The chain runs to 213 residues: Ribosomal RNA large subunit methyltransferase E (213 aa).

Residues glycine 68, tryptophan 70, aspartate 88, aspartate 104, and aspartate 127 each contribute to the S-adenosyl-L-methionine site. The active-site Proton acceptor is the lysine 167.

This sequence belongs to the class I-like SAM-binding methyltransferase superfamily. RNA methyltransferase RlmE family.

Its subcellular location is the cytoplasm. It catalyses the reaction uridine(2552) in 23S rRNA + S-adenosyl-L-methionine = 2'-O-methyluridine(2552) in 23S rRNA + S-adenosyl-L-homocysteine + H(+). Functionally, specifically methylates the uridine in position 2552 of 23S rRNA at the 2'-O position of the ribose in the fully assembled 50S ribosomal subunit. The chain is Ribosomal RNA large subunit methyltransferase E from Neorickettsia sennetsu (strain ATCC VR-367 / Miyayama) (Ehrlichia sennetsu).